The chain runs to 425 residues: UDP-N-acetylglucosamine 1-carboxyvinyltransferase (425 aa).

Phosphoenolpyruvate is bound at residue 22-23 (KN). Arg-91 provides a ligand contact to UDP-N-acetyl-alpha-D-glucosamine. Catalysis depends on Cys-115, which acts as the Proton donor. At Cys-115 the chain carries 2-(S-cysteinyl)pyruvic acid O-phosphothioketal. UDP-N-acetyl-alpha-D-glucosamine is bound by residues 120-124 (RPIDL), Asp-305, and Val-327.

Belongs to the EPSP synthase family. MurA subfamily.

The protein resides in the cytoplasm. The enzyme catalyses phosphoenolpyruvate + UDP-N-acetyl-alpha-D-glucosamine = UDP-N-acetyl-3-O-(1-carboxyvinyl)-alpha-D-glucosamine + phosphate. It functions in the pathway cell wall biogenesis; peptidoglycan biosynthesis. In terms of biological role, cell wall formation. Adds enolpyruvyl to UDP-N-acetylglucosamine. The polypeptide is UDP-N-acetylglucosamine 1-carboxyvinyltransferase (Coprothermobacter proteolyticus (strain ATCC 35245 / DSM 5265 / OCM 4 / BT)).